The following is a 467-amino-acid chain: Ribulose bisphosphate carboxylase large chain (467 aa).

Lysine 5 carries the post-translational modification N6,N6,N6-trimethyllysine. Asparagine 114 and threonine 164 together coordinate substrate. The active-site Proton acceptor is the lysine 166. Lysine 168 contacts substrate. Residues lysine 192, aspartate 194, and glutamate 195 each coordinate Mg(2+). Residue lysine 192 is modified to N6-carboxylysine. Histidine 285 (proton acceptor) is an active-site residue. Substrate is bound by residues arginine 286, histidine 318, and serine 370.

The protein belongs to the RuBisCO large chain family. Type I subfamily. In terms of assembly, heterohexadecamer of 8 large chains and 8 small chains; disulfide-linked. The disulfide link is formed within the large subunit homodimers. The cofactor is Mg(2+). Post-translationally, the disulfide bond which can form in the large chain dimeric partners within the hexadecamer appears to be associated with oxidative stress and protein turnover.

The protein localises to the plastid. It localises to the chloroplast. The catalysed reaction is 2 (2R)-3-phosphoglycerate + 2 H(+) = D-ribulose 1,5-bisphosphate + CO2 + H2O. It catalyses the reaction D-ribulose 1,5-bisphosphate + O2 = 2-phosphoglycolate + (2R)-3-phosphoglycerate + 2 H(+). RuBisCO catalyzes two reactions: the carboxylation of D-ribulose 1,5-bisphosphate, the primary event in carbon dioxide fixation, as well as the oxidative fragmentation of the pentose substrate in the photorespiration process. Both reactions occur simultaneously and in competition at the same active site. This Eriodictyon californicum (California yerba santa) protein is Ribulose bisphosphate carboxylase large chain.